Here is a 439-residue protein sequence, read N- to C-terminus: MNLTHTQLAEHGYMSGFANEFATEALPGALPVGQNSPQRAPYGLYAEQLSGTAFTAPRAHNRRSWLYRIRPGAVHKPFTLVEQSRFLSRFDEVPPSPNQMRWSPPAMPTTPTDFIDGIVTMAGNGGPDAMTGCGIHLYLANQSMQDRFFYNADGEMLIVPQQGRVRFVTEMGRLDVEPQEIVVIPRGVRFRVELPDGEARGYICENYGALFKLPDLGVIGSNGLANPRDFMTPVAAYEDREGDFELVAKFQGNLWRADIGHSPLDVVAWHGNFAPYKYDLRRFNTIGSISFDHPDPSIFLVLQSPSDTPGVDTIDFVIFGPRWLAMENSFRPPWFHRNIASEFMGLITGVYDAKADGFAPGGASLHNCMSGHGPDADTFAKATSADTSTPHHITDTMAFMFETPGVIRPTPYAARSASLQQDYYTCWQGLKKHFNPNVR.

H293 acts as the Proton acceptor in catalysis. Fe cation contacts are provided by H336 and E342. Homogentisate contacts are provided by Y351 and H372. Residue H372 participates in Fe cation binding.

Belongs to the homogentisate dioxygenase family. As to quaternary structure, hexamer; dimer of trimers. Requires Fe cation as cofactor.

The catalysed reaction is homogentisate + O2 = 4-maleylacetoacetate + H(+). It participates in amino-acid degradation; L-phenylalanine degradation; acetoacetate and fumarate from L-phenylalanine: step 4/6. Functionally, involved in the catabolism of homogentisate (2,5-dihydroxyphenylacetate or 2,5-OH-PhAc), a central intermediate in the degradation of phenylalanine and tyrosine. Catalyzes the oxidative ring cleavage of the aromatic ring of homogentisate to yield maleylacetoacetate. In Cupriavidus pinatubonensis (strain JMP 134 / LMG 1197) (Cupriavidus necator (strain JMP 134)), this protein is Homogentisate 1,2-dioxygenase.